Here is a 304-residue protein sequence, read N- to C-terminus: L-threonate dehydrogenase (304 aa).

Residues 7 to 35 and Thr-102 contribute to the NAD(+) site; that span reads YAVAVIGLGSMGFGAAASCINAGLTTYGV. Residue Lys-178 is part of the active site. Lys-246 contacts NAD(+).

This sequence belongs to the HIBADH-related family. L-threonate dehydrogenase subfamily.

The enzyme catalyses L-threonate + NAD(+) = 2-dehydro-L-erythronate + NADH + H(+). Catalyzes oxidation of L-threonate to 2-oxo-tetronate. Can use either NAD(+) or NADP(+) as cosubstrate, with a preference for NAD(+). The sequence is that of L-threonate dehydrogenase from Pectobacterium atrosepticum (strain SCRI 1043 / ATCC BAA-672) (Erwinia carotovora subsp. atroseptica).